The following is a 149-amino-acid chain: Deoxyuridine 5'-triphosphate nucleotidohydrolase (149 aa).

Substrate-binding positions include arginine 68–glycine 70, asparagine 81, leucine 85–aspartate 87, and methionine 95.

The protein belongs to the dUTPase family. It depends on Mg(2+) as a cofactor.

It carries out the reaction dUTP + H2O = dUMP + diphosphate + H(+). Its pathway is pyrimidine metabolism; dUMP biosynthesis; dUMP from dCTP (dUTP route): step 2/2. Its function is as follows. This enzyme is involved in nucleotide metabolism: it produces dUMP, the immediate precursor of thymidine nucleotides and it decreases the intracellular concentration of dUTP so that uracil cannot be incorporated into DNA. The sequence is that of Deoxyuridine 5'-triphosphate nucleotidohydrolase from Herminiimonas arsenicoxydans.